A 523-amino-acid polypeptide reads, in one-letter code: UDP-glucuronosyltransferase 3A1 (523 aa).

Positions M1–A23 are cleaved as a signal peptide. Residues K24 to Q483 lie on the Extracellular side of the membrane. Residue N125 is glycosylated (N-linked (GlcNAc...) asparagine). Residues Y484–V504 traverse the membrane as a helical segment. Residues K505–N523 lie on the Cytoplasmic side of the membrane.

The protein belongs to the UDP-glycosyltransferase family.

The protein resides in the membrane. It carries out the reaction glucuronate acceptor + UDP-alpha-D-glucuronate = acceptor beta-D-glucuronoside + UDP + H(+). UDP-glucuronosyltransferases catalyze phase II biotransformation reactions in which lipophilic substrates are conjugated with glucuronic acid to increase water solubility and enhance excretion. They are of major importance in the conjugation and subsequent elimination of potentially toxic xenobiotics and endogenous compounds. This Xenopus laevis (African clawed frog) protein is UDP-glucuronosyltransferase 3A1 (ugt3a1).